The primary structure comprises 259 residues: 5'-nucleotidase SurE (259 aa).

A divalent metal cation-binding residues include Asp15, Asp16, Ser46, and Asn102.

Belongs to the SurE nucleotidase family. It depends on a divalent metal cation as a cofactor.

It is found in the cytoplasm. It catalyses the reaction a ribonucleoside 5'-phosphate + H2O = a ribonucleoside + phosphate. In terms of biological role, nucleotidase that shows phosphatase activity on nucleoside 5'-monophosphates. This chain is 5'-nucleotidase SurE, found in Chlorobium luteolum (strain DSM 273 / BCRC 81028 / 2530) (Pelodictyon luteolum).